The sequence spans 999 residues: Caspase recruitment domain-containing protein 14 (999 aa).

A CARD domain is found at 15-107 (DEEMLWDMLE…DVYTLVTGLQ (93 aa)). Residues 125-411 (TECLAGAISS…QLRRLQAEAP (287 aa)) adopt a coiled-coil conformation. The maintains the protein in an inactive state stretch occupies residues 409-565 (EAPGGPKQEA…RRPARKILSQ (157 aa)). Serine 541 is subject to Phosphoserine. Residues 572–655 (QGDALLEQIG…SCYLSVKINT (84 aa)) enclose the PDZ domain. Residues 803–986 (SESCFTLAPY…LLSCVRLAIA (184 aa)) enclose the Guanylate kinase-like domain.

As to quaternary structure, interacts (via CARD domain) with BCL10 (via CARD domain). Forms a complex with MALT1 and BCL10; resulting in the formation of a CBM (CARD14-BLC10-MALT1) complex. Interacts with TRAF2, TRAF3 and TRAF6.

The protein resides in the cytoplasm. In terms of biological role, acts as a scaffolding protein that can activate the inflammatory transcription factor NF-kappa-B and p38/JNK MAP kinase signaling pathways. Forms a signaling complex with BCL10 and MALT1, and activates MALT1 proteolytic activity and inflammatory gene expression. MALT1 is indispensable for CARD14-induced activation of NF-kappa-B and p38/JNK MAP kinases. May play a role in signaling mediated by TRAF2, TRAF3 and TRAF6 and protects cells against apoptosis. This chain is Caspase recruitment domain-containing protein 14 (Card14), found in Mus musculus (Mouse).